We begin with the raw amino-acid sequence, 297 residues long: Mycothiol acetyltransferase (297 aa).

N-acetyltransferase domains follow at residues 8–153 (DALD…PPLP) and 156–297 (VALR…QYAL). E36 serves as a coordination point for 1D-myo-inositol 2-(L-cysteinylamino)-2-deoxy-alpha-D-glucopyranoside. 80–82 (LAV) is a binding site for acetyl-CoA. 3 residues coordinate 1D-myo-inositol 2-(L-cysteinylamino)-2-deoxy-alpha-D-glucopyranoside: E183, K223, and E231. Acetyl-CoA is bound by residues 235–237 (VGV) and 242–248 (QGGGLGK). Residue Y269 coordinates 1D-myo-inositol 2-(L-cysteinylamino)-2-deoxy-alpha-D-glucopyranoside. 274-279 (NSPAVR) contributes to the acetyl-CoA binding site.

This sequence belongs to the acetyltransferase family. MshD subfamily. Monomer.

It catalyses the reaction 1D-myo-inositol 2-(L-cysteinylamino)-2-deoxy-alpha-D-glucopyranoside + acetyl-CoA = mycothiol + CoA + H(+). Catalyzes the transfer of acetyl from acetyl-CoA to desacetylmycothiol (Cys-GlcN-Ins) to form mycothiol. This Actinosynnema mirum (strain ATCC 29888 / DSM 43827 / JCM 3225 / NBRC 14064 / NCIMB 13271 / NRRL B-12336 / IMRU 3971 / 101) protein is Mycothiol acetyltransferase.